A 199-amino-acid polypeptide reads, in one-letter code: uncharacterized protein (199 aa).

In terms of domain architecture, Nudix hydrolase spans 38 to 169 (NRRAAVLIPI…SLDIHREGIN (132 aa)). The short motif at 76–98 (GKADPDDQSLISTALREAEEEVA) is the Nudix box element. Glu-92 and Glu-96 together coordinate Mg(2+).

It belongs to the Nudix hydrolase family. PCD1 subfamily. It depends on Mn(2+) as a cofactor. The cofactor is Mg(2+).

Probably mediates the hydrolysis of some nucleoside diphosphate derivatives. This is an uncharacterized protein from Yersinia pseudotuberculosis serotype I (strain IP32953).